A 103-amino-acid chain; its full sequence is uncharacterized protein (103 aa).

A signal peptide spans 1 to 13 (MLLSSIVSFVADA). An N-linked (GlcNAc...) asparagine glycan is attached at N67. Residues 73–103 (LSSDSNRNIIDNSNNNQHPSSSSTSTSWKKF) form a disordered region.

It localises to the secreted. This is an uncharacterized protein from Dictyostelium discoideum (Social amoeba).